Here is a 334-residue protein sequence, read N- to C-terminus: Glyceraldehyde-3-phosphate dehydrogenase B (334 aa).

NAD(+) contacts are provided by residues 12-13 (RI), Asp-34, and Ser-121. D-glyceraldehyde 3-phosphate contacts are provided by residues 149–151 (SCT), Thr-180, 209–210 (TG), and Arg-232. The Nucleophile role is filled by Cys-150. NAD(+) is bound at residue Asn-314.

The protein belongs to the glyceraldehyde-3-phosphate dehydrogenase family. In terms of assembly, homotetramer.

It catalyses the reaction D-glyceraldehyde 3-phosphate + phosphate + NAD(+) = (2R)-3-phospho-glyceroyl phosphate + NADH + H(+). It functions in the pathway carbohydrate degradation; glycolysis; pyruvate from D-glyceraldehyde 3-phosphate: step 1/5. Glyceraldehyde-3-phosphate dehydrogenase; part of the gene cluster that mediates the biosynthesis of heptelidic acid (HA), a sesquiterpene lactone that acts as an inhibitor of glyceraldehyde-3-phosphatedehydrogenase (GAPDH) and a growth inhibitor of the salt-tolerant lactic acid bacteria in soy sauce brewing. The GAPDPH hepG/gdpB shows much higher resistance to HA than the GAPDH gpdA located outside of the cluster, but it does not seem to act in self-resistance. This is Glyceraldehyde-3-phosphate dehydrogenase B from Aspergillus oryzae (strain ATCC 42149 / RIB 40) (Yellow koji mold).